The chain runs to 100 residues: Large ribosomal subunit protein eL14 (100 aa).

It belongs to the eukaryotic ribosomal protein eL14 family.

In Aeropyrum pernix (strain ATCC 700893 / DSM 11879 / JCM 9820 / NBRC 100138 / K1), this protein is Large ribosomal subunit protein eL14.